A 428-amino-acid polypeptide reads, in one-letter code: Adenylosuccinate synthetase (428 aa).

Residues 12 to 18 and 40 to 42 contribute to the GTP site; these read GDEGKGK and GHS. Residue Asp-13 is the Proton acceptor of the active site. Mg(2+) is bound by residues Asp-13 and Gly-40. Residues 13-16, 38-41, Thr-128, Arg-142, Gln-223, Thr-238, and Arg-302 each bind IMP; these read DEGK and NAGH. Residue His-41 is the Proton donor of the active site. 298-304 is a substrate binding site; that stretch reads VTTGRPR. Residues Arg-304, 330-332, and 412-414 each bind GTP; these read KLD and GTG.

It belongs to the adenylosuccinate synthetase family. In terms of assembly, homodimer. Requires Mg(2+) as cofactor.

It localises to the cytoplasm. It catalyses the reaction IMP + L-aspartate + GTP = N(6)-(1,2-dicarboxyethyl)-AMP + GDP + phosphate + 2 H(+). It participates in purine metabolism; AMP biosynthesis via de novo pathway; AMP from IMP: step 1/2. In terms of biological role, plays an important role in the de novo pathway of purine nucleotide biosynthesis. Catalyzes the first committed step in the biosynthesis of AMP from IMP. The protein is Adenylosuccinate synthetase of Bifidobacterium longum (strain DJO10A).